A 1241-amino-acid chain; its full sequence is ATP-dependent helicase/nuclease subunit A (1241 aa).

Residues 12-485 (SQWTDDQWKA…IDLAKNFRSR (474 aa)) form the UvrD-like helicase ATP-binding domain. 33-40 (AAAGSGKT) contributes to the ATP binding site. The UvrD-like helicase C-terminal domain maps to 505-805 (GEIDYDADAE…RIMTIHKSKG (301 aa)).

The protein belongs to the helicase family. AddA subfamily. Heterodimer of AddA and AddB/RexB. Mg(2+) serves as cofactor.

The catalysed reaction is Couples ATP hydrolysis with the unwinding of duplex DNA by translocating in the 3'-5' direction.. It carries out the reaction ATP + H2O = ADP + phosphate + H(+). Functionally, the heterodimer acts as both an ATP-dependent DNA helicase and an ATP-dependent, dual-direction single-stranded exonuclease. Recognizes the chi site generating a DNA molecule suitable for the initiation of homologous recombination. The AddA nuclease domain is required for chi fragment generation; this subunit has the helicase and 3' -&gt; 5' nuclease activities. The polypeptide is ATP-dependent helicase/nuclease subunit A (Bacillus cereus (strain G9842)).